Reading from the N-terminus, the 115-residue chain is Large ribosomal subunit protein uL22 (115 aa).

Belongs to the universal ribosomal protein uL22 family. In terms of assembly, part of the 50S ribosomal subunit.

This protein binds specifically to 23S rRNA; its binding is stimulated by other ribosomal proteins, e.g. L4, L17, and L20. It is important during the early stages of 50S assembly. It makes multiple contacts with different domains of the 23S rRNA in the assembled 50S subunit and ribosome. Its function is as follows. The globular domain of the protein is located near the polypeptide exit tunnel on the outside of the subunit, while an extended beta-hairpin is found that lines the wall of the exit tunnel in the center of the 70S ribosome. This is Large ribosomal subunit protein uL22 from Nitrosospira multiformis (strain ATCC 25196 / NCIMB 11849 / C 71).